The following is a 123-amino-acid chain: Small ribosomal subunit protein uS12 (123 aa).

D89 is modified (3-methylthioaspartic acid). The segment at 104–123 (SVGVKDRKKSRSKYGAKRPK) is disordered. Basic residues predominate over residues 109–123 (DRKKSRSKYGAKRPK).

The protein belongs to the universal ribosomal protein uS12 family. As to quaternary structure, part of the 30S ribosomal subunit. Contacts proteins S8 and S17. May interact with IF1 in the 30S initiation complex.

In terms of biological role, with S4 and S5 plays an important role in translational accuracy. Its function is as follows. Interacts with and stabilizes bases of the 16S rRNA that are involved in tRNA selection in the A site and with the mRNA backbone. Located at the interface of the 30S and 50S subunits, it traverses the body of the 30S subunit contacting proteins on the other side and probably holding the rRNA structure together. The combined cluster of proteins S8, S12 and S17 appears to hold together the shoulder and platform of the 30S subunit. The chain is Small ribosomal subunit protein uS12 from Pelobacter propionicus (strain DSM 2379 / NBRC 103807 / OttBd1).